A 159-amino-acid polypeptide reads, in one-letter code: 3-hydroxyacyl-[acyl-carrier-protein] dehydratase FabZ (159 aa).

H58 is an active-site residue.

The protein belongs to the thioester dehydratase family. FabZ subfamily.

Its subcellular location is the cytoplasm. It carries out the reaction a (3R)-hydroxyacyl-[ACP] = a (2E)-enoyl-[ACP] + H2O. In terms of biological role, involved in unsaturated fatty acids biosynthesis. Catalyzes the dehydration of short chain beta-hydroxyacyl-ACPs and long chain saturated and unsaturated beta-hydroxyacyl-ACPs. The polypeptide is 3-hydroxyacyl-[acyl-carrier-protein] dehydratase FabZ (Helicobacter pylori (strain P12)).